The following is a 359-amino-acid chain: 3-dehydroquinate synthase (359 aa).

Residues 70–75 (DAEGGK), 104–108 (GAATD), 128–129 (TT), Lys141, and Lys150 each bind NAD(+). Positions 183, 246, and 262 each coordinate Zn(2+).

It belongs to the sugar phosphate cyclases superfamily. Dehydroquinate synthase family. Co(2+) is required as a cofactor. Zn(2+) serves as cofactor. Requires NAD(+) as cofactor.

The protein resides in the cytoplasm. It carries out the reaction 7-phospho-2-dehydro-3-deoxy-D-arabino-heptonate = 3-dehydroquinate + phosphate. Its pathway is metabolic intermediate biosynthesis; chorismate biosynthesis; chorismate from D-erythrose 4-phosphate and phosphoenolpyruvate: step 2/7. Catalyzes the conversion of 3-deoxy-D-arabino-heptulosonate 7-phosphate (DAHP) to dehydroquinate (DHQ). This Mycolicibacterium gilvum (strain PYR-GCK) (Mycobacterium gilvum (strain PYR-GCK)) protein is 3-dehydroquinate synthase.